A 232-amino-acid chain; its full sequence is 7-cyano-7-deazaguanine synthase (232 aa).

7-17 (CSGGLDSVSLA) contributes to the ATP binding site. Zn(2+) is bound by residues Cys185, Cys193, Cys196, and Cys199.

It belongs to the QueC family. Zn(2+) is required as a cofactor.

It carries out the reaction 7-carboxy-7-deazaguanine + NH4(+) + ATP = 7-cyano-7-deazaguanine + ADP + phosphate + H2O + H(+). Its pathway is purine metabolism; 7-cyano-7-deazaguanine biosynthesis. In terms of biological role, catalyzes the ATP-dependent conversion of 7-carboxy-7-deazaguanine (CDG) to 7-cyano-7-deazaguanine (preQ(0)). In Chelativorans sp. (strain BNC1), this protein is 7-cyano-7-deazaguanine synthase.